Consider the following 166-residue polypeptide: Large ribosomal subunit protein uL10 (166 aa).

It belongs to the universal ribosomal protein uL10 family. Part of the ribosomal stalk of the 50S ribosomal subunit. The N-terminus interacts with L11 and the large rRNA to form the base of the stalk. The C-terminus forms an elongated spine to which L12 dimers bind in a sequential fashion forming a multimeric L10(L12)X complex.

Forms part of the ribosomal stalk, playing a central role in the interaction of the ribosome with GTP-bound translation factors. This Streptococcus pneumoniae (strain ATCC 700669 / Spain 23F-1) protein is Large ribosomal subunit protein uL10.